Reading from the N-terminus, the 133-residue chain is Large-conductance mechanosensitive channel (133 aa).

2 consecutive transmembrane segments (helical) span residues 14–34 and 73–93; these read VVDL…VTTL and FITV…MVVV.

The protein belongs to the MscL family. As to quaternary structure, homopentamer.

Its subcellular location is the cell membrane. Functionally, channel that opens in response to stretch forces in the membrane lipid bilayer. May participate in the regulation of osmotic pressure changes within the cell. This is Large-conductance mechanosensitive channel from Renibacterium salmoninarum (strain ATCC 33209 / DSM 20767 / JCM 11484 / NBRC 15589 / NCIMB 2235).